The chain runs to 96 residues: MDIKSNSFFYIFISVVLLLIAILQYDLWFSNTGFIKYQALKKSVISQQKEVKHKSQTNVQLYSEVVSLRQNSEVLESLARENMGLIKQGEVFYSVK.

Residues 1–11 (MDIKSNSFFYI) are Cytoplasmic-facing. The helical transmembrane segment at 12 to 29 (FISVVLLLIAILQYDLWF) threads the bilayer. At 30 to 96 (SNTGFIKYQA…KQGEVFYSVK (67 aa)) the chain is on the periplasmic side.

It belongs to the FtsB family. Part of a complex composed of FtsB, FtsL and FtsQ.

It localises to the cell inner membrane. Its function is as follows. Essential cell division protein. May link together the upstream cell division proteins, which are predominantly cytoplasmic, with the downstream cell division proteins, which are predominantly periplasmic. The sequence is that of Cell division protein FtsB from Francisella tularensis subsp. tularensis (strain SCHU S4 / Schu 4).